A 324-amino-acid chain; its full sequence is Acetyl-coenzyme A carboxylase carboxyl transferase subunit alpha (324 aa).

The CoA carboxyltransferase C-terminal domain occupies 44–298 (RFQDKLTKLQ…RKELIKQLNI (255 aa)).

Belongs to the AccA family. As to quaternary structure, acetyl-CoA carboxylase is a heterohexamer composed of biotin carboxyl carrier protein (accB), biotin carboxylase (accC) and two subunits each of ACCase subunit alpha (accA) and ACCase subunit beta (accD).

The protein localises to the plastid. Its subcellular location is the chloroplast. The catalysed reaction is N(6)-carboxybiotinyl-L-lysyl-[protein] + acetyl-CoA = N(6)-biotinyl-L-lysyl-[protein] + malonyl-CoA. The protein operates within lipid metabolism; malonyl-CoA biosynthesis; malonyl-CoA from acetyl-CoA: step 1/1. In terms of biological role, component of the acetyl coenzyme A carboxylase (ACC) complex. First, biotin carboxylase catalyzes the carboxylation of biotin on its carrier protein (BCCP) and then the CO(2) group is transferred by the carboxyltransferase to acetyl-CoA to form malonyl-CoA. The chain is Acetyl-coenzyme A carboxylase carboxyl transferase subunit alpha from Porphyra purpurea (Red seaweed).